We begin with the raw amino-acid sequence, 189 residues long: Protein GrpE (189 aa).

The interval 1 to 24 (MADEQNLDTQNPEAQAAENAAPSD) is disordered. Over residues 10-24 (QNPEAQAAENAAPSD) the composition is skewed to low complexity.

It belongs to the GrpE family. As to quaternary structure, homodimer.

The protein resides in the cytoplasm. In terms of biological role, participates actively in the response to hyperosmotic and heat shock by preventing the aggregation of stress-denatured proteins, in association with DnaK and GrpE. It is the nucleotide exchange factor for DnaK and may function as a thermosensor. Unfolded proteins bind initially to DnaJ; upon interaction with the DnaJ-bound protein, DnaK hydrolyzes its bound ATP, resulting in the formation of a stable complex. GrpE releases ADP from DnaK; ATP binding to DnaK triggers the release of the substrate protein, thus completing the reaction cycle. Several rounds of ATP-dependent interactions between DnaJ, DnaK and GrpE are required for fully efficient folding. This is Protein GrpE from Ectopseudomonas mendocina (strain ymp) (Pseudomonas mendocina).